The chain runs to 185 residues: Ribosome-recycling factor (185 aa).

The protein belongs to the RRF family.

It localises to the cytoplasm. Functionally, responsible for the release of ribosomes from messenger RNA at the termination of protein biosynthesis. May increase the efficiency of translation by recycling ribosomes from one round of translation to another. This is Ribosome-recycling factor from Syntrophus aciditrophicus (strain SB).